Consider the following 355-residue polypeptide: Putative L-lysine 2,3-aminomutase (355 aa).

The region spanning valine 93–proline 308 is the Radical SAM core domain. Cysteine 108, cysteine 112, and cysteine 115 together coordinate [4Fe-4S] cluster. Lysine 320 is subject to N6-(pyridoxal phosphate)lysine.

Belongs to the radical SAM superfamily. KamA family. It depends on [4Fe-4S] cluster as a cofactor. The cofactor is pyridoxal 5'-phosphate.

This chain is Putative L-lysine 2,3-aminomutase, found in Treponema pallidum (strain Nichols).